A 541-amino-acid chain; its full sequence is Protein yellow (541 aa).

The N-terminal stretch at 1 to 21 is a signal peptide; the sequence is MFQDKGWVLLTLITLVSPSWA. Asparagine 144 is a glycosylation site (N-linked (GlcNAc...) asparagine).

This sequence belongs to the major royal jelly protein family.

It localises to the secreted. In terms of biological role, controls the pigmentation pattern of the adult cuticle and larval mouth parts. The polypeptide is Protein yellow (y) (Drosophila yakuba (Fruit fly)).